We begin with the raw amino-acid sequence, 346 residues long: N-acetyl-gamma-glutamyl-phosphate reductase (346 aa).

The active site involves Cys-150.

Belongs to the NAGSA dehydrogenase family. Type 1 subfamily.

The protein localises to the cytoplasm. It carries out the reaction N-acetyl-L-glutamate 5-semialdehyde + phosphate + NADP(+) = N-acetyl-L-glutamyl 5-phosphate + NADPH + H(+). It participates in amino-acid biosynthesis; L-arginine biosynthesis; N(2)-acetyl-L-ornithine from L-glutamate: step 3/4. Functionally, catalyzes the NADPH-dependent reduction of N-acetyl-5-glutamyl phosphate to yield N-acetyl-L-glutamate 5-semialdehyde. The polypeptide is N-acetyl-gamma-glutamyl-phosphate reductase (Desulforamulus reducens (strain ATCC BAA-1160 / DSM 100696 / MI-1) (Desulfotomaculum reducens)).